Here is a 31-residue protein sequence, read N- to C-terminus: Bacteriocin leucocin-B (31 aa).

The protein localises to the secreted. In terms of biological role, inhibits a wide spectrum of lactic acid bacteria. The protein is Bacteriocin leucocin-B of Leuconostoc mesenteroides.